The primary structure comprises 257 residues: 5-keto-4-deoxy-D-glucarate aldolase (257 aa).

The active-site Proton acceptor is the histidine 51. Glutamine 152 lines the substrate pocket. Residue glutamate 154 coordinates Mg(2+). 2 residues coordinate substrate: serine 179 and aspartate 180. Position 180 (aspartate 180) interacts with Mg(2+).

This sequence belongs to the HpcH/HpaI aldolase family. KDGluc aldolase subfamily. In terms of assembly, homohexamer; trimer of dimers. Mg(2+) serves as cofactor.

It catalyses the reaction 5-dehydro-4-deoxy-D-glucarate = 2-hydroxy-3-oxopropanoate + pyruvate. The enzyme catalyses 2-dehydro-3-deoxy-D-glucarate = 2-hydroxy-3-oxopropanoate + pyruvate. The protein operates within carbohydrate acid metabolism; galactarate degradation; D-glycerate from galactarate: step 2/3. Functionally, catalyzes the reversible retro-aldol cleavage of both 5-keto-4-deoxy-D-glucarate and 2-keto-3-deoxy-D-glucarate to pyruvate and tartronic semialdehyde. The polypeptide is 5-keto-4-deoxy-D-glucarate aldolase (Shigella boydii serotype 18 (strain CDC 3083-94 / BS512)).